A 600-amino-acid chain; its full sequence is Methionine--tRNA ligase (600 aa).

The 'HIGH' region signature appears at 12–22 (PYANGPRHIGH). Residues Cys144, Cys147, Cys157, and Cys160 each coordinate Zn(2+). The 'KMSKS' region motif lies at 351 to 355 (KFSSS). Position 354 (Ser354) interacts with ATP.

Belongs to the class-I aminoacyl-tRNA synthetase family. MetG type 1 subfamily. As to quaternary structure, monomer. Zn(2+) serves as cofactor.

The protein resides in the cytoplasm. It carries out the reaction tRNA(Met) + L-methionine + ATP = L-methionyl-tRNA(Met) + AMP + diphosphate. Is required not only for elongation of protein synthesis but also for the initiation of all mRNA translation through initiator tRNA(fMet) aminoacylation. The sequence is that of Methionine--tRNA ligase from Chloroflexus aggregans (strain MD-66 / DSM 9485).